The sequence spans 586 residues: Protein cereblon (586 aa).

Disordered regions lie at residues 1 to 114 (MDDE…LPRW) and 158 to 194 (SQER…IDIG). Basic and acidic residues predominate over residues 14–37 (GRDEDVQLEDHSQAQGLQDRRVDA). Positions 75–85 (MVEDGLQDDTA) are enriched in acidic residues. The span at 86 to 96 (SEGSHPSSDMS) shows a compositional bias: polar residues. Basic and acidic residues predominate over residues 159–168 (QERRRSRTSE). Residues 170–179 (TSQEDVEQPE) are compositionally biased toward acidic residues. The segment covering 180–190 (DPPPQQPPRPP) has biased composition (pro residues). The region spanning 226–452 (HMLIFLHQHI…LIKSTFTDES (227 aa)) is the Lon N-terminal domain. The CULT domain maps to 451 to 560 (ESLFFCRYCN…LAGSSVRIGK (110 aa)). Positions 456, 459, 525, and 528 each coordinate Zn(2+).

Belongs to the CRBN family. As to quaternary structure, likely a component of a DCX (DDB1-CUL4-X-box) protein ligase complex. May interact with pic/DDB1. Ubiquitinated.

Its subcellular location is the nucleus. The protein operates within protein modification; protein ubiquitination. Substrate recognition component of a DCX (DDB1-CUL4-X-box) E3 protein ligase complex that mediates the ubiquitination and subsequent proteasomal degradation of target proteins. Has an essential role in mediating growth by negatively regulating insulin signaling. It also has a role in maintaining presynaptic function in the neuromuscular junction synapses of third-instar larvae. The protein is Protein cereblon of Drosophila erecta (Fruit fly).